A 695-amino-acid chain; its full sequence is Nucleoprotein (695 aa).

Coiled-coil stretches lie at residues 316-341 (VNVG…RRHE) and 372-400 (QTLA…EDQG). 2 disordered regions span residues 426 to 458 (RSIN…SFVD) and 472 to 611 (TLEN…EDTR). The segment covering 474-484 (ENSVMAPSTTL) has biased composition (polar residues). Over residues 502 to 516 (ISQKKQGNESTDPAR) the composition is skewed to basic and acidic residues. Acidic residues predominate over residues 529–547 (QEDDESEYTTDSQESDDQP). Residues 603–606 (PSAP) carry the PTAP/PSAP motif motif.

It belongs to the filoviruses nucleoprotein family. As to quaternary structure, homooligomer. Homomultimerizes to form the nucleocapsid. Binds to viral genomic RNA. Interacts with VP35 and VP30 to form the nucleocapsid. Also interacts with VP24 and VP40. In terms of processing, phosphorylated.

The protein resides in the virion. The protein localises to the host cytoplasm. Functionally, encapsidates the genome, protecting it from nucleases. The encapsidated genomic RNA is termed the nucleocapsid and serves as template for transcription and replication. During replication, encapsidation by NP is coupled to RNA synthesis and all replicative products are resistant to nucleases. In Lake Victoria marburgvirus (strain Ravn-87) (MARV), this protein is Nucleoprotein (NP).